A 353-amino-acid chain; its full sequence is Photosystem II protein D1 (353 aa).

Position 2 is an N-acetylthreonine (Thr-2). Position 2 is a phosphothreonine (Thr-2). The next 3 membrane-spanning stretches (helical) occupy residues 29 to 46, 118 to 133, and 142 to 156; these read YIGW…TATS, HFLL…EWEL, and WIAV…AATA. His-118 is a chlorophyll a binding site. Residue Tyr-126 coordinates pheophytin a. Residues Asp-170 and Glu-189 each coordinate [CaMn4O5] cluster. A helical membrane pass occupies residues 197–218; it reads FHMLGVAGVFGGSLFSAMHGSL. His-198 lines the chlorophyll a pocket. Residues His-215 and 264-265 contribute to the a quinone site; that span reads SF. His-215 contributes to the Fe cation binding site. His-272 contributes to the Fe cation binding site. The helical transmembrane segment at 274–288 threads the bilayer; that stretch reads FLAAWPVAGIWFTAL. Residues His-332, Glu-333, Asp-342, and Ala-344 each coordinate [CaMn4O5] cluster. Residues 345–353 constitute a propeptide that is removed on maturation; that stretch reads AVESISIGG.

It belongs to the reaction center PufL/M/PsbA/D family. As to quaternary structure, PSII is composed of 1 copy each of membrane proteins PsbA, PsbB, PsbC, PsbD, PsbE, PsbF, PsbH, PsbI, PsbJ, PsbK, PsbL, PsbM, PsbT, PsbX, PsbY, PsbZ, Psb30/Ycf12, at least 3 peripheral proteins of the oxygen-evolving complex and a large number of cofactors. It forms dimeric complexes. The D1/D2 heterodimer binds P680, chlorophylls that are the primary electron donor of PSII, and subsequent electron acceptors. It shares a non-heme iron and each subunit binds pheophytin, quinone, additional chlorophylls, carotenoids and lipids. D1 provides most of the ligands for the Mn4-Ca-O5 cluster of the oxygen-evolving complex (OEC). There is also a Cl(-1) ion associated with D1 and D2, which is required for oxygen evolution. The PSII complex binds additional chlorophylls, carotenoids and specific lipids. is required as a cofactor. Tyr-161 forms a radical intermediate that is referred to as redox-active TyrZ, YZ or Y-Z. Post-translationally, C-terminally processed by CTPA; processing is essential to allow assembly of the oxygen-evolving complex and thus photosynthetic growth.

The protein localises to the plastid. Its subcellular location is the chloroplast thylakoid membrane. It catalyses the reaction 2 a plastoquinone + 4 hnu + 2 H2O = 2 a plastoquinol + O2. Its function is as follows. Photosystem II (PSII) is a light-driven water:plastoquinone oxidoreductase that uses light energy to abstract electrons from H(2)O, generating O(2) and a proton gradient subsequently used for ATP formation. It consists of a core antenna complex that captures photons, and an electron transfer chain that converts photonic excitation into a charge separation. The D1/D2 (PsbA/PsbD) reaction center heterodimer binds P680, the primary electron donor of PSII as well as several subsequent electron acceptors. In Pinus koraiensis (Korean pine), this protein is Photosystem II protein D1.